A 504-amino-acid chain; its full sequence is WD repeat-containing protein 55 homolog (504 aa).

The span at 32–49 shows a compositional bias: acidic residues; sequence QEVVNESDSEIGEYDLGD. The interval 32–135 is disordered; that stretch reads QEVVNESDSE…NAFDMDEDDE (104 aa). A compositionally biased stretch (polar residues) spans 66–76; the sequence is DSISSDGSFNP. The segment covering 77–95 has biased composition (acidic residues); that stretch reads NDEDSDTDSDDSMLDEPDE. The span at 114-124 shows a compositional bias: polar residues; it reads SGSSNRNQDSD. WD repeat units lie at residues 158 to 197, 202 to 241, 245 to 283, 286 to 325, 328 to 367, and 412 to 451; these read KLEDFITDICFHPERHIIALATIIGDVHLYEYSNEENKLL, VHAKACRDVEFTEDGRSLITCSKDKSVMITDMETEKLKKL, AHDDAINKLLVLDERLFASGDDSGTVKLWDFRTKDSIFE, EIEDQVTQMITNDQKKLLLATSADGYLTTFNIGARKLYVQ, PYEEELNCMGIYRGNSKLVVGTSKGRLYSYNWGYFGYHCD, and QHNMPIESMDINTNGELLASSSHNNDVRFWNVKYFEDFGD. The tract at residues 484–504 is disordered; it reads AKEDNNDNENDDATAGPSNTT.

It belongs to the WD repeat WDR55 family.

This is WD repeat-containing protein 55 homolog from Drosophila willistoni (Fruit fly).